The primary structure comprises 298 residues: Inosose dehydratase (298 aa).

It belongs to the IolE/MocC family. It depends on glutathione as a cofactor. The cofactor is Co(2+). Mn(2+) serves as cofactor.

It carries out the reaction scyllo-inosose = 3D-3,5/4-trihydroxycyclohexane-1,2-dione + H2O. Its pathway is polyol metabolism; myo-inositol degradation into acetyl-CoA; acetyl-CoA from myo-inositol: step 2/7. Catalyzes the dehydration of inosose (2-keto-myo-inositol, 2KMI or 2,4,6/3,5-pentahydroxycyclohexanone) to 3D-(3,5/4)-trihydroxycyclohexane-1,2-dione (D-2,3-diketo-4-deoxy-epi-inositol). In Bacillus thuringiensis (strain Al Hakam), this protein is Inosose dehydratase.